A 961-amino-acid chain; its full sequence is Mitogen-activated protein kinase kinase kinase 13-A (961 aa).

The tract at residues Leu-88–Arg-118 is disordered. A Protein kinase domain is found at Ile-169 to Ile-410. Residues Leu-175–Val-183 and Lys-196 each bind ATP. Asp-280 acts as the Proton acceptor in catalysis. Leucine-zipper regions lie at residues Val-434–Leu-455 and Leu-487–Val-508. Residues Arg-458–Arg-497 adopt a coiled-coil conformation. 3 disordered regions span residues Pro-513–Ser-600, Ala-615–Tyr-637, and Arg-799–Asp-883. Low complexity predominate over residues Ser-560–Ser-578. The segment covering Asn-584–Asn-596 has biased composition (basic residues). The span at Glu-810–Val-823 shows a compositional bias: acidic residues. An acidic region spans residues Ser-811–Glu-824. Residues Lys-837–Val-851 are compositionally biased toward polar residues.

It belongs to the protein kinase superfamily. Ser/Thr protein kinase family.

The protein localises to the cytoplasm. Its subcellular location is the membrane. It carries out the reaction L-seryl-[protein] + ATP = O-phospho-L-seryl-[protein] + ADP + H(+). It catalyses the reaction L-threonyl-[protein] + ATP = O-phospho-L-threonyl-[protein] + ADP + H(+). May have a role in the JNK signaling pathway. In Xenopus laevis (African clawed frog), this protein is Mitogen-activated protein kinase kinase kinase 13-A (map3k13-a).